The following is a 221-amino-acid chain: GTP-binding nuclear protein Ran-3 (221 aa).

Positions 10–174 constitute a Small GTPase Ran-type domain; sequence DYPSFKLVIV…LYLARKLAGD (165 aa). 21-28 is a binding site for GTP; it reads DGGTGKTT. The segment at 40 to 48 is switch-I; the sequence is KKYEPTIGV. GTP contacts are provided by residues Gly71, 125–128, and 153–155; these read NKVD and SAK. Residues 71–87 are switch-II; sequence GQEKFGGLRDGYYIHGQ. The disordered stretch occupies residues 201-221; it reads EAELAAAASQPLPDDDDDTFE.

The protein belongs to the small GTPase superfamily. Ran family. In terms of assembly, found in a nuclear export complex with RanGTP, exportin and pre-miRNA. Interacts with RanBP1a and RanBP1b. Interacts with KPNB1.

It is found in the nucleus. GTP-binding protein involved in nucleocytoplasmic transport. Required for the import of protein into the nucleus and also for RNA export. Involved in chromatin condensation and control of cell cycle. The protein is GTP-binding nuclear protein Ran-3 (RAN3) of Arabidopsis thaliana (Mouse-ear cress).